The following is a 236-amino-acid chain: Ubiquinone biosynthesis O-methyltransferase (236 aa).

S-adenosyl-L-methionine contacts are provided by Arg36, Gly56, Asp77, and Met125.

Belongs to the methyltransferase superfamily. UbiG/COQ3 family.

The catalysed reaction is a 3-demethylubiquinol + S-adenosyl-L-methionine = a ubiquinol + S-adenosyl-L-homocysteine + H(+). It catalyses the reaction a 3-(all-trans-polyprenyl)benzene-1,2-diol + S-adenosyl-L-methionine = a 2-methoxy-6-(all-trans-polyprenyl)phenol + S-adenosyl-L-homocysteine + H(+). It functions in the pathway cofactor biosynthesis; ubiquinone biosynthesis. Its function is as follows. O-methyltransferase that catalyzes the 2 O-methylation steps in the ubiquinone biosynthetic pathway. The chain is Ubiquinone biosynthesis O-methyltransferase from Haemophilus ducreyi (strain 35000HP / ATCC 700724).